The chain runs to 202 residues: B-cell CLL/lymphoma 7 protein family member B (202 aa).

Positions 53 to 202 (DSKEKEKSKS…PTVPQTASES (150 aa)) are disordered. The segment covering 90–99 (ENSNQSSVSD) has biased composition (polar residues). Residues 107–123 (SSTNSSPSPQQSESLSP) show a composition bias toward low complexity. Ser-114, Ser-118, Ser-120, Ser-122, Ser-127, Ser-148, and Ser-152 each carry phosphoserine.

It belongs to the BCL7 family. Ubiquitous.

Functionally, positive regulator of apoptosis. Plays a role in the Wnt signaling pathway, negatively regulating the expression of Wnt signaling components CTNNB1 and HMGA1. Involved in cell cycle progression, maintenance of the nuclear structure and stem cell differentiation. May play a role in lung tumor development or progression. The chain is B-cell CLL/lymphoma 7 protein family member B (BCL7B) from Homo sapiens (Human).